Reading from the N-terminus, the 510-residue chain is ATP-dependent zinc metalloprotease FtsH 2 (510 aa).

Over 1 to 4 (MKKN) the chain is Cytoplasmic. The helical transmembrane segment at 5-25 (LHIIILALSIFINLLFIYIFI) threads the bilayer. The Extracellular segment spans residues 26 to 31 (SEVKPN). Residues 32 to 52 (LNLNLSFILTAAVIVVTYLLF) form a helical membrane-spanning segment. Over 53–510 (KNKFSELMPV…LWEEENTLCV (458 aa)) the chain is Cytoplasmic. Residue 124-131 (GPPGTGKT) coordinates ATP. His-343 serves as a coordination point for Zn(2+). Residue Glu-344 is part of the active site. Positions 347 and 418 each coordinate Zn(2+).

It in the central section; belongs to the AAA ATPase family. This sequence in the C-terminal section; belongs to the peptidase M41 family. In terms of assembly, homohexamer. The cofactor is Zn(2+).

The protein resides in the cell membrane. Acts as a processive, ATP-dependent zinc metallopeptidase for both cytoplasmic and membrane proteins. Plays a role in the quality control of integral membrane proteins. This is ATP-dependent zinc metalloprotease FtsH 2 from Thermoanaerobacter sp. (strain X514).